A 323-amino-acid polypeptide reads, in one-letter code: Ribose-phosphate pyrophosphokinase 2 (323 aa).

Residues 43–45 (DGE) and 102–103 (RQ) each bind ATP. Residues His-136 and Asp-177 each contribute to the Mg(2+) site. Lys-200 is a catalytic residue. D-ribose 5-phosphate is bound by residues Arg-202, Asp-226, and 230–234 (DTAGT).

This sequence belongs to the ribose-phosphate pyrophosphokinase family. Class I subfamily. In terms of assembly, homohexamer. Mg(2+) is required as a cofactor.

The protein localises to the cytoplasm. It carries out the reaction D-ribose 5-phosphate + ATP = 5-phospho-alpha-D-ribose 1-diphosphate + AMP + H(+). It functions in the pathway metabolic intermediate biosynthesis; 5-phospho-alpha-D-ribose 1-diphosphate biosynthesis; 5-phospho-alpha-D-ribose 1-diphosphate from D-ribose 5-phosphate (route I): step 1/1. Functionally, involved in the biosynthesis of the central metabolite phospho-alpha-D-ribosyl-1-pyrophosphate (PRPP) via the transfer of pyrophosphoryl group from ATP to 1-hydroxyl of ribose-5-phosphate (Rib-5-P). The chain is Ribose-phosphate pyrophosphokinase 2 from Enterococcus faecalis (strain ATCC 700802 / V583).